The following is a 366-amino-acid chain: Ribosomal RNA large subunit methyltransferase M (366 aa).

Residues Ser188, 221–224 (CPGG), Asp240, Asp260, and Asp277 each bind S-adenosyl-L-methionine. Lys306 acts as the Proton acceptor in catalysis.

It belongs to the class I-like SAM-binding methyltransferase superfamily. RNA methyltransferase RlmE family. RlmM subfamily. Monomer.

The protein resides in the cytoplasm. The catalysed reaction is cytidine(2498) in 23S rRNA + S-adenosyl-L-methionine = 2'-O-methylcytidine(2498) in 23S rRNA + S-adenosyl-L-homocysteine + H(+). In terms of biological role, catalyzes the 2'-O-methylation at nucleotide C2498 in 23S rRNA. This Escherichia coli O45:K1 (strain S88 / ExPEC) protein is Ribosomal RNA large subunit methyltransferase M.